Reading from the N-terminus, the 31-residue chain is Cycloviolacin-O14 (31 aa).

A cross-link (cyclopeptide (Gly-Asn)) is located at residues Gly1–Asn31. Disulfide bonds link Cys6-Cys20, Cys10-Cys22, and Cys15-Cys28.

In terms of processing, this is a cyclic peptide. In terms of tissue distribution, expressed in leaves and petioles but not in petals, roots and runners (at protein level).

Functionally, probably participates in a plant defense mechanism. Has hemolytic activity. In Viola odorata (Sweet violet), this protein is Cycloviolacin-O14.